An 854-amino-acid polypeptide reads, in one-letter code: Protein unc-33 (854 aa).

3 disordered regions span residues 57–114 (ETVS…IPAP), 130–327 (ELFG…DGNG), and 794–854 (VERV…TGFW). Composition is skewed to polar residues over residues 58 to 68 (TVSNKSRSSEG) and 75 to 97 (RPNS…TSAR). Residues 193–202 (KVLRGEKSTP) are compositionally biased toward basic and acidic residues. Over residues 240–257 (VDDEEEPEAEAQEMEEPQ) the composition is skewed to acidic residues. A compositionally biased stretch (basic and acidic residues) spans 279–298 (HPSEDGDSTRNGETPTDRRN). A compositionally biased stretch (polar residues) spans 802 to 811 (SSQQQKPQQN). A compositionally biased stretch (basic and acidic residues) spans 816 to 827 (NSGDFDRNRTKV).

The protein belongs to the metallo-dependent hydrolases superfamily. Hydantoinase/dihydropyrimidinase family. As to quaternary structure, isoform a: Probable monomer. Isoform b: Probable homodimer. Isoform c: Probable homodimer. Probable heterodimer composed of isoform b and isoform c. Interacts with unc-14 and kinesin-1 motor complex light chain klc-1; both interactions regulate unc-33 neurite localization. Interacts with fln-1 (via calponin-homology (CH) domains and filamin repeat 18-19). Isoform c: Interacts with vab-8 isoform a. Expressed in ventral cord and nerve ring (at protein level). Isoform a: Expressed in nerve ring (at protein level). Expressed in the nervous system, two amphid socket cells and weakly in non-neuronal pharyngeal cells.

It localises to the cell projection. The protein localises to the axon. It is found in the dendrite. In terms of biological role, during neurogenesis, plays an essential role in axonal guidance and outgrowth by regulating the polarization of both microtubule and actin cytoskeletons. Establishes the asymmetry of axonal and dendrite microtubules and the polarized sorting of neuronal proteins. This is achieved in part by regulating the localization of kinesin-like protein unc-104. In neurons without a distal microtubule-organizing center (MTOC), also controls the organization of microtubules in dendrites. During the dorso-ventral axonal guidance and outgrowth of VD neurons, required downstream of Rac GTPases ced-10 and mig-2 to inhibit growth cone filopodial protrusion mediated by the unc-6/netrin receptor unc-40-unc-5. Specifically, regulates growth cone filopodial protrusion polarity, and thus migration, by promoting F-actin polarization and by restricting plus-end microtubule accumulation in the growth cone. Probably downstream of mab-20/Sema2a and mab-20 receptor plx-2, regulates the guidance of DD/VD neuron axons by modulating fln-1 interaction with F-actin which results in the remodeling of the actin cytoskeleton. In hermaphrodites, involved in sex myoblast (SM) migration by regulating the gonad-dependent repulsion of SMs. Its function is as follows. In neurons, required for the polarized sorting of axonal proteins. In PLM neuron, regulates innexin unc-9 gap junction turnover by suppressing unc-9 transport out of gap junctions. Plays a role in locomotion and egg-laying. Functionally, in PLM neuron, regulates innexin unc-9 gap junction turnover by suppressing unc-9 transport out of gap junctions. The chain is Protein unc-33 from Caenorhabditis elegans.